We begin with the raw amino-acid sequence, 422 residues long: Cytochrome P-450 monooxygenase DoxA (422 aa).

Cys-369 is a binding site for heme.

This sequence belongs to the cytochrome P450 family. In terms of assembly, monomer. Requires heme as cofactor.

It localises to the cytoplasm. The catalysed reaction is 13-deoxydaunorubicin + NADPH + O2 + H(+) = 13-dihydrodaunorubicin + NADP(+) + H2O. The enzyme catalyses 13-dihydrodaunorubicin + NADPH + O2 + H(+) = daunorubicin + NADP(+) + 2 H2O. It carries out the reaction 13-deoxycarminomycin + NADPH + O2 + H(+) = 13-dihydrocarminomycin + NADP(+) + H2O. It catalyses the reaction 13-dihydrocarminomycin + NADPH + O2 + H(+) = carminomycin + NADP(+) + 2 H2O. It functions in the pathway antibiotic biosynthesis; daunorubicin biosynthesis. The protein operates within antibiotic biosynthesis; carminomycin biosynthesis. Its activity is regulated as follows. Strongly inhibited by dithiothreitol and high ionic strength buffers. Functionally, involved in the biosynthesis of the anthracyclines carminomycin and daunorubicin (daunomycin) which are aromatic polyketide antibiotics that exhibit high cytotoxicity and are widely applied in the chemotherapy of a variety of cancers. In vivo, DoxA catalyzes the C-13 hydroxylation of 13-deoxycarminomycin and 13-deoxydaunorubicin to yield 13-dihydrocarminomycin and 13-dihydrodaunorubicin, respectively, as well as the oxidation of these 13-dihydro-anthracyclines to their respective 13-keto forms, carminomycin and daunorubicin. In vitro, it also catalyzes the C-14 hydroxylation of daunorubicin to form doxorubicin (adriamycin), although this strain is not a doxorubicin producer. It is not able to accept anthracyclinones (aglycones) and anthracyclines with a 10-carbomethoxyl moiety. 13-oxidation of the anthracyclines possessing the 4-methoxy substitution is greatly favored. The anthracycline analog desacetyladriamycin can be oxidized to 10-hydroxydesacetyladriamycin. It can only use NADP. DoxA acts jointly with DauV. The chain is Cytochrome P-450 monooxygenase DoxA (doxA) from Streptomyces sp. (strain C5).